A 478-amino-acid polypeptide reads, in one-letter code: Ketoisovalerate oxidoreductase subunit VorA (478 aa).

As to quaternary structure, heterotrimer of the VorA, VorB and VorC subunits.

In Methanothermobacter marburgensis (strain ATCC BAA-927 / DSM 2133 / JCM 14651 / NBRC 100331 / OCM 82 / Marburg) (Methanobacterium thermoautotrophicum), this protein is Ketoisovalerate oxidoreductase subunit VorA (vorA).